The following is a 714-amino-acid chain: MAAKPKTPPPVDSLTRAQAKIEHKRLALEIETHNERYYQKDAPTVSDAAYDALRQRLEAIEARFPDLITANSPTQTVGAAPARGFAKVQHAVPMLSLGNAFSDEEVAEFVERIQRFLKLGPDDIPAIVAEPKIDGLSLSLRYENGELVRAATRGDGFTGEDVTANVRTIKDVPHNLRGRNIPTACELRGEVYMLKTDFLALNKKQEDAGDTVFANPRNSAAGSLRQKDVAITASRPLKFFAYAWGEMTDRPADTQHDMLEWLKDVGFKVNPLIELCNSVEKVLKFYRKIGEQRASLGYDIDGVVYKVDRLDWQERLGFVSRSPRWAIAHKFAAEQATTILKGIDIQVGRTGAMTPVARLEPVTIGGVVVQNATLHNEDYIKGIGNDGQPIRDGVDLRVGDTVVVQRAGDVIPQVVSVVIDKRPNSAQPYAFPHTCPICGSHAVREEGEAVRRCTGALICPAQAVERLKHFVSRLAFDIDGLGEKQIQEFHERGWIKEPADIFTLRERNPKIKLEELEGFGEVSVRNLFAAIDARRTIELNRLIFALGIRHVGEGNAKLLARHYGGIDAFRAAMSEAAAAQTDDGNASEAYADLNNISGIGDIVADAVVEFFAETRNVKALNDLLEEIEVLPVAQARNDSAVAGKTVVFTGSLEKFTRDEAKASAERMGAKVSGSVSKKTDLVVAGPGAGSKLKDAEKHGVQVISEDEWLKLIEG.

NAD(+)-binding positions include 47–51 (DAAYD), 96–97 (SL), and Glu-130. Lys-132 serves as the catalytic N6-AMP-lysine intermediate. The NAD(+) site is built by Arg-153, Glu-190, Lys-306, and Lys-330. Zn(2+)-binding residues include Cys-435, Cys-438, Cys-453, and Cys-459. A BRCT domain is found at 636-714 (RNDSAVAGKT…EDEWLKLIEG (79 aa)).

This sequence belongs to the NAD-dependent DNA ligase family. LigA subfamily. Mg(2+) serves as cofactor. It depends on Mn(2+) as a cofactor.

The catalysed reaction is NAD(+) + (deoxyribonucleotide)n-3'-hydroxyl + 5'-phospho-(deoxyribonucleotide)m = (deoxyribonucleotide)n+m + AMP + beta-nicotinamide D-nucleotide.. Functionally, DNA ligase that catalyzes the formation of phosphodiester linkages between 5'-phosphoryl and 3'-hydroxyl groups in double-stranded DNA using NAD as a coenzyme and as the energy source for the reaction. It is essential for DNA replication and repair of damaged DNA. This is DNA ligase from Nitrobacter hamburgensis (strain DSM 10229 / NCIMB 13809 / X14).